Here is a 684-residue protein sequence, read N- to C-terminus: Poly(A) RNA polymerase cid14 (684 aa).

3 disordered regions span residues Met1–Asp52, Asp64–Glu127, and Trp161–Glu219. Basic and acidic residues-rich tracts occupy residues Glu19–Ser35, Gly73–Gly91, Asp108–Glu127, Ser171–Lys186, and Phe199–Asn210. Mg(2+) is bound by residues Asp298 and Asp300. 6 residues coordinate ATP: Gly364, Lys389, Ser407, Tyr408, Asn492, and Lys496. The region spanning Asn434–Asn492 is the PAP-associated domain. Residues Gly623 to Phe684 are disordered. Positions Gln628–Ser655 are enriched in polar residues. The span at Asp656–Asp672 shows a compositional bias: acidic residues.

The protein belongs to the DNA polymerase type-B-like family. In terms of assembly, heterooligomer. Component of the TRAMP complex composed of at least cid14, mtr4, and air1. The cofactor is Mg(2+). It depends on Mn(2+) as a cofactor.

It localises to the nucleus. Its subcellular location is the nucleolus. It catalyses the reaction RNA(n) + ATP = RNA(n)-3'-adenine ribonucleotide + diphosphate. Functionally, required for 3' polyadenylation of the 5.8S and 25S rRNAs as a prelude to their degradation in the exosome. Involved in the nucleolar organization to ensure faithful chromosome segregation during mitosis. This chain is Poly(A) RNA polymerase cid14 (cid14), found in Schizosaccharomyces pombe (strain 972 / ATCC 24843) (Fission yeast).